Consider the following 531-residue polypeptide: ATP synthase subunit beta (531 aa).

The disordered stretch occupies residues 1–48 (MVKAVTSSKETAKVEKKKSAPRSGVKKAVSKSQAGVKDSSSPVHKSSK). The segment covering 19-29 (SAPRSGVKKAV) has biased composition (basic residues). A compositionally biased stretch (polar residues) spans 30-44 (SKSQAGVKDSSSPVH). Residue 203-210 (GGAGVGKT) coordinates ATP.

Belongs to the ATPase alpha/beta chains family. As to quaternary structure, F-type ATPases have 2 components, CF(1) - the catalytic core - and CF(0) - the membrane proton channel. CF(1) has five subunits: alpha(3), beta(3), gamma(1), delta(1), epsilon(1). CF(0) has three main subunits: a(1), b(2) and c(9-12). The alpha and beta chains form an alternating ring which encloses part of the gamma chain. CF(1) is attached to CF(0) by a central stalk formed by the gamma and epsilon chains, while a peripheral stalk is formed by the delta and b chains.

The protein localises to the cell inner membrane. It catalyses the reaction ATP + H2O + 4 H(+)(in) = ADP + phosphate + 5 H(+)(out). Its function is as follows. Produces ATP from ADP in the presence of a proton gradient across the membrane. The catalytic sites are hosted primarily by the beta subunits. The chain is ATP synthase subunit beta from Bartonella henselae (strain ATCC 49882 / DSM 28221 / CCUG 30454 / Houston 1) (Rochalimaea henselae).